The primary structure comprises 112 residues: Gastrula zinc finger protein XlCGF9.1 (112 aa).

C2H2-type zinc fingers lie at residues 6 to 28 (FICSDCGKCFNDSSILIRHMKIH), 34 to 56 (FCCPQCGRKFRRRAHLIVHERTH), 62 to 84 (FTCPECGKSFARRSHLMDHRIIH), and 90 to 112 (YSCPECGKCFGLQGYLNKHFKIH).

Belongs to the krueppel C2H2-type zinc-finger protein family.

The protein localises to the nucleus. Functionally, may be involved in transcriptional regulation. The chain is Gastrula zinc finger protein XlCGF9.1 from Xenopus laevis (African clawed frog).